A 361-amino-acid chain; its full sequence is N-methyltransferase benX (361 aa).

Belongs to the methyltransferase superfamily.

It participates in secondary metabolite biosynthesis. N-methyltransferase; part of the gene cluster that mediates the biosynthesis of benzomalvin A and D. The pathway begins with the loading of amino acid precursors onto the A domains of the non ribosomal peptide synthetases benY and benZ. BenY and the A1 domain of benZ are loaded with anthranilate (Anth), while the A2 domain of benZ is loaded with phenylalanine (Phe). N-methylation of Phe by the methyltransferase benX may happen before loading of Phe onto benZ, after loading of Phe, or after dipeptide formation. Condensation of Anth with the secondary amine of NmPhe or Phe is catalyzed by the C1 domain of benZ, forming a dipeptide intermediate. This is followed by in trans condensation of the Anth-NmPhe dipeptide with Anth bound to the T domain of benY by the C2 domain of benZ to form the linear tripeptide Anth-NmPhe-Anth. Cyclization and release of the tripeptide is then catalyzed by the C-terminal C domain of benY and the resulting 11-member macrocyclic intermediate is expected to spontaneously collapse to form the benzodiazepine core. Benzomalvin A is in conformational equilibrium with its atropisomer, benzomalvin D. In Aspergillus terreus, this protein is N-methyltransferase benX.